A 99-amino-acid chain; its full sequence is DNA-directed RNA polymerase subunit omega (99 aa).

This sequence belongs to the RNA polymerase subunit omega family. As to quaternary structure, the RNAP catalytic core consists of 2 alpha, 1 beta, 1 beta' and 1 omega subunit. When a sigma factor is associated with the core the holoenzyme is formed, which can initiate transcription.

It carries out the reaction RNA(n) + a ribonucleoside 5'-triphosphate = RNA(n+1) + diphosphate. Functionally, promotes RNA polymerase assembly. Latches the N- and C-terminal regions of the beta' subunit thereby facilitating its interaction with the beta and alpha subunits. In Thermus thermophilus (strain ATCC BAA-163 / DSM 7039 / HB27), this protein is DNA-directed RNA polymerase subunit omega.